An 83-amino-acid polypeptide reads, in one-letter code: MSKGHSLQDPYLNALRKERIPVSIFLVNGIKLQGQIESFDQFVILLKNTVSQMVYKHAISTVVPARNVRLPQQNPAGEGESED.

A Sm domain is found at 9 to 68; the sequence is DPYLNALRKERIPVSIFLVNGIKLQGQIESFDQFVILLKNTVSQMVYKHAISTVVPARNV.

It belongs to the Hfq family. In terms of assembly, homohexamer.

In terms of biological role, RNA chaperone that binds small regulatory RNA (sRNAs) and mRNAs to facilitate mRNA translational regulation in response to envelope stress, environmental stress and changes in metabolite concentrations. Also binds with high specificity to tRNAs. In Marinobacter nauticus (strain ATCC 700491 / DSM 11845 / VT8) (Marinobacter aquaeolei), this protein is RNA-binding protein Hfq.